Reading from the N-terminus, the 674-residue chain is Dymeclin (674 aa).

Gly2 is lipidated: N-myristoyl glycine.

It belongs to the dymeclin family. In terms of assembly, interacts with GOLM1 and PPIB. Post-translationally, myristoylated in vitro; myristoylation is not essential for protein targeting to Golgi compartment.

The protein localises to the cytoplasm. Its subcellular location is the golgi apparatus. It is found in the membrane. In terms of biological role, necessary for correct organization of Golgi apparatus. Involved in bone development. The protein is Dymeclin (Dym) of Rattus norvegicus (Rat).